Consider the following 177-residue polypeptide: Large ribosomal subunit protein uL6 (177 aa).

It belongs to the universal ribosomal protein uL6 family. Part of the 50S ribosomal subunit.

Functionally, this protein binds to the 23S rRNA, and is important in its secondary structure. It is located near the subunit interface in the base of the L7/L12 stalk, and near the tRNA binding site of the peptidyltransferase center. This chain is Large ribosomal subunit protein uL6, found in Nitrobacter winogradskyi (strain ATCC 25391 / DSM 10237 / CIP 104748 / NCIMB 11846 / Nb-255).